The primary structure comprises 131 residues: MKKTTVINSEISSVIAGMGHMDWLGIGDAGMPVPLGTKKIDLALTKNLPSFIDVLKNVLTELEVQKIYLADEIKTKNPEQLQAIKQLMPNVEIEFVPHSELKKDLAKTHAFIRTGEMTAFSNIILESGVVF.

H20 (proton donor) is an active-site residue. Residues D28, H98, and 120 to 122 (FSN) contribute to the substrate site.

The protein belongs to the RbsD / FucU family. RbsD subfamily. In terms of assembly, homodecamer.

It localises to the cytoplasm. The enzyme catalyses beta-D-ribopyranose = beta-D-ribofuranose. It participates in carbohydrate metabolism; D-ribose degradation; D-ribose 5-phosphate from beta-D-ribopyranose: step 1/2. Catalyzes the interconversion of beta-pyran and beta-furan forms of D-ribose. This is D-ribose pyranase from Oenococcus oeni (strain ATCC BAA-331 / PSU-1).